A 194-amino-acid polypeptide reads, in one-letter code: Peptidyl-tRNA hydrolase (194 aa).

TRNA is bound at residue Tyr-19. Residue His-24 is the Proton acceptor of the active site. TRNA is bound by residues Phe-69, Asn-71, and Asn-117.

It belongs to the PTH family. In terms of assembly, monomer.

It is found in the cytoplasm. The enzyme catalyses an N-acyl-L-alpha-aminoacyl-tRNA + H2O = an N-acyl-L-amino acid + a tRNA + H(+). Hydrolyzes ribosome-free peptidyl-tRNAs (with 1 or more amino acids incorporated), which drop off the ribosome during protein synthesis, or as a result of ribosome stalling. In terms of biological role, catalyzes the release of premature peptidyl moieties from peptidyl-tRNA molecules trapped in stalled 50S ribosomal subunits, and thus maintains levels of free tRNAs and 50S ribosomes. The chain is Peptidyl-tRNA hydrolase from Neorickettsia sennetsu (strain ATCC VR-367 / Miyayama) (Ehrlichia sennetsu).